We begin with the raw amino-acid sequence, 91 residues long: Uteroglobin (91 aa).

Residues 1–21 form the signal peptide; that stretch reads MKLTITLALVTLALLCSPASA.

It belongs to the secretoglobin family. Antiparallel homodimer; disulfide-linked. Interaction with LMBR1L is controversial.

The protein localises to the secreted. Uteroglobin binds progesterone specifically and with high affinity. It may regulate progesterone concentrations reaching the blastocyst. It is also a potent inhibitor of phospholipase A2. This is Uteroglobin (SCGB1A1) from Lepus capensis (Brown hare).